The primary structure comprises 1082 residues: TNF receptor-associated factor homolog 1b (1082 aa).

A disordered region spans residues 1 to 54; the sequence is MAEAVDEDSGVGRSLEESSNGQHSQAGEALSEWRSSGQVENGTPSTSPSYWDID. A2 carries the N-acetylalanine modification. A compositionally biased stretch (polar residues) spans 33-49; that stretch reads WRSSGQVENGTPSTSPS. Positions 67 to 198 constitute an MATH domain; the sequence is YGQYTWKIPK…SGCLTIEAKV (132 aa). 6 disordered regions span residues 358-388, 440-666, 697-762, 780-800, 812-841, and 858-889; these read LPPKDEKGRQNRTKDGNDGEEVNKEADERDE, TEQR…SNVG, SIVN…QVVL, LSAPKQPPATTISRPSSAPII, SSVQTTTSLPRSVSSAGRLGPDPSLHNQQT, and SSSSSFNHHPSSHGVVPTTLPSSSYSQAPTSS. 2 stretches are compositionally biased toward basic and acidic residues: residues 359-388 and 440-453; these read PPKDEKGRQNRTKDGNDGEEVNKEADERDE and TEQRAKRGAAEREK. Positions 446–507 form a coiled coil; sequence RGAAEREKKS…EEEKDSVTEK (62 aa). The span at 454–471 shows a compositional bias: basic residues; sequence KSKKKQAKQKRNKNKGKD. Over residues 472-488 the composition is skewed to basic and acidic residues; sequence KRKEEKVSFATHAKDLE. Low complexity-rich tracts occupy residues 519-534 and 560-573; these read GDVSDISDSVDGSADI and SSEGSSRGRGISIS. Composition is skewed to polar residues over residues 588-630 and 645-666; these read DDSS…QQVK and QPSTLGTDPKGQNYSSEASNVG. 2 stretches are compositionally biased toward low complexity: residues 858–871 and 878–889; these read SSSSSFNHHPSSHG and PSSSYSQAPTSS.

As to quaternary structure, forms homooligomers. Interacts with SNC1, RPS2 and CPR1/CPR30. Interacts with ATG6.

Its subcellular location is the cytoplasm. It localises to the cell membrane. In terms of biological role, functions redundantly with TRAF1A in the regulation of plant immune response. Contributes to the turnover of the nucleotide-binding domain and leucine-rich repeat-containing (NB-LRR) immune receptors SNC1 and RPS2. May associate with an E3 ubiquitin-protein ligase complex, which modulates ubiquitination and subsequent degradation of NB-LRR immune sensors to maintain their homeostasis. Functions redundantly with TRAF1A in the regulation of autophagosome formation. Required for SINAT1- and SINAT2-mediated ubiquitination and destabilization of ATG6. Functions as a molecular adapter that helps to regulate autophagy by modulating ATG6 stability. In Arabidopsis thaliana (Mouse-ear cress), this protein is TNF receptor-associated factor homolog 1b.